Reading from the N-terminus, the 37-residue chain is Large ribosomal subunit protein bL36c (37 aa).

The protein belongs to the bacterial ribosomal protein bL36 family.

It localises to the plastid. Its subcellular location is the chloroplast. The polypeptide is Large ribosomal subunit protein bL36c (Acorus calamus (Sweet flag)).